A 360-amino-acid polypeptide reads, in one-letter code: Peptide chain release factor 1 (360 aa).

Gln234 is subject to N5-methylglutamine.

It belongs to the prokaryotic/mitochondrial release factor family. In terms of processing, methylated by PrmC. Methylation increases the termination efficiency of RF1.

Its subcellular location is the cytoplasm. Functionally, peptide chain release factor 1 directs the termination of translation in response to the peptide chain termination codons UAG and UAA. The sequence is that of Peptide chain release factor 1 from Clostridium perfringens (strain 13 / Type A).